Reading from the N-terminus, the 103-residue chain is NADH-quinone oxidoreductase subunit K (103 aa).

Helical transmembrane passes span 5–25, 30–50, and 66–86; these read ISSY…GALT, VVVL…LVAF, and LFTM…LIAL.

It belongs to the complex I subunit 4L family. As to quaternary structure, NDH-1 is composed of 14 different subunits. Subunits NuoA, H, J, K, L, M, N constitute the membrane sector of the complex.

It localises to the cell membrane. The enzyme catalyses a quinone + NADH + 5 H(+)(in) = a quinol + NAD(+) + 4 H(+)(out). In terms of biological role, NDH-1 shuttles electrons from NADH, via FMN and iron-sulfur (Fe-S) centers, to quinones in the respiratory chain. The immediate electron acceptor for the enzyme in this species is believed to be a menaquinone. Couples the redox reaction to proton translocation (for every two electrons transferred, four hydrogen ions are translocated across the cytoplasmic membrane), and thus conserves the redox energy in a proton gradient. This chain is NADH-quinone oxidoreductase subunit K, found in Brevibacillus brevis (strain 47 / JCM 6285 / NBRC 100599).